We begin with the raw amino-acid sequence, 535 residues long: Bifunctional purine biosynthesis protein PurH (535 aa).

Residues 6 to 151 (TRLPVRRALI…KNHKDVAIVV (146 aa)) enclose the MGS-like domain.

The protein belongs to the PurH family.

The catalysed reaction is (6R)-10-formyltetrahydrofolate + 5-amino-1-(5-phospho-beta-D-ribosyl)imidazole-4-carboxamide = 5-formamido-1-(5-phospho-D-ribosyl)imidazole-4-carboxamide + (6S)-5,6,7,8-tetrahydrofolate. It catalyses the reaction IMP + H2O = 5-formamido-1-(5-phospho-D-ribosyl)imidazole-4-carboxamide. The protein operates within purine metabolism; IMP biosynthesis via de novo pathway; 5-formamido-1-(5-phospho-D-ribosyl)imidazole-4-carboxamide from 5-amino-1-(5-phospho-D-ribosyl)imidazole-4-carboxamide (10-formyl THF route): step 1/1. It participates in purine metabolism; IMP biosynthesis via de novo pathway; IMP from 5-formamido-1-(5-phospho-D-ribosyl)imidazole-4-carboxamide: step 1/1. The chain is Bifunctional purine biosynthesis protein PurH from Pseudomonas putida (strain GB-1).